An 82-amino-acid polypeptide reads, in one-letter code: Protein CYSTEINE-RICH TRANSMEMBRANE MODULE 13 (82 aa).

A disordered region spans residues 1–58 (MYHQEQHPVGAPPPQGYPPKDGYPPAGYPPAGYPPPGYAQGYPAQGYPPPQYSQAPQQ). A compositionally biased stretch (pro residues) spans 26-37 (AGYPPAGYPPPG). The helical transmembrane segment at 59 to 76 (KQNAGMLEGCLAALCCCC) threads the bilayer.

This sequence belongs to the CYSTM1 family. Homodimer and heterodimers. Interacts with CYSTM7, CYTSM3, CYTSM4, CYTSM5, CYTSM6, CYTSM9, CYTSM10 and CYTSM11. Binds weakly to CYSTM1 and CYSTM2. Expressed in root meristem, root vasculature, leaf vasculature and floral organ primordia. Mostly expressed in roots and flowers and, to a lower extent, in stems, siliques and leaves.

The protein localises to the cell membrane. In terms of biological role, required for the promotion of megasporogenesis, or promotion of germ cell formation from somatic precursor cells. Acts redundantly with WIH2. Functions in a genetic pathway downstream of SPL/NZZ and WUS and together with TRN2 in promoting megasporogenesis. Involved in resistance to abiotic stress. This Arabidopsis thaliana (Mouse-ear cress) protein is Protein CYSTEINE-RICH TRANSMEMBRANE MODULE 13.